Consider the following 550-residue polypeptide: Hydroxylamine reductase (550 aa).

Cys-3, Cys-6, Cys-18, and Cys-25 together coordinate [2Fe-2S] cluster. His-249, Glu-273, Cys-317, Cys-405, Cys-433, Cys-458, Glu-492, and Lys-494 together coordinate hybrid [4Fe-2O-2S] cluster. Cys-405 bears the Cysteine persulfide mark.

Belongs to the HCP family. It depends on [2Fe-2S] cluster as a cofactor. The cofactor is hybrid [4Fe-2O-2S] cluster.

It localises to the cytoplasm. The catalysed reaction is A + NH4(+) + H2O = hydroxylamine + AH2 + H(+). Its function is as follows. Catalyzes the reduction of hydroxylamine to form NH(3) and H(2)O. This is Hydroxylamine reductase from Salmonella enteritidis PT4 (strain P125109).